The sequence spans 468 residues: 3-isopropylmalate dehydratase large subunit (468 aa).

[4Fe-4S] cluster-binding residues include C347, C408, and C411.

This sequence belongs to the aconitase/IPM isomerase family. LeuC type 1 subfamily. In terms of assembly, heterodimer of LeuC and LeuD. The cofactor is [4Fe-4S] cluster.

The catalysed reaction is (2R,3S)-3-isopropylmalate = (2S)-2-isopropylmalate. It functions in the pathway amino-acid biosynthesis; L-leucine biosynthesis; L-leucine from 3-methyl-2-oxobutanoate: step 2/4. Its function is as follows. Catalyzes the isomerization between 2-isopropylmalate and 3-isopropylmalate, via the formation of 2-isopropylmaleate. The polypeptide is 3-isopropylmalate dehydratase large subunit (Methylobacillus flagellatus (strain ATCC 51484 / DSM 6875 / VKM B-1610 / KT)).